Consider the following 1451-residue polypeptide: Murinoglobulin-2 (1451 aa).

Residues 1-27 (MWKSRRAQLCLFSVLLAFLPSASSLNG) form the signal peptide. Disulfide bonds link C48-C86, C251-C276, and C269-C288. N-linked (GlcNAc...) asparagine glycosylation is present at N55. N-linked (GlcNAc...) asparagine glycans are attached at residues N294, N313, and N500. 3 disulfides stabilise this stretch: C461–C555, C587–C773, and C634–C680. The tract at residues 677 to 734 (PKICFDSAPMSGPRGKFDLAFSSEVSGTLQKGSSKRPQPEEPPREDPPPKDPLAETIR) is bait region. The disordered stretch occupies residues 703 to 728 (GTLQKGSSKRPQPEEPPREDPPPKDP). Residues 713–728 (PQPEEPPREDPPPKDP) are compositionally biased toward basic and acidic residues. 3 N-linked (GlcNAc...) asparagine glycosylation sites follow: N749, N776, and N871. 4 cysteine pairs are disulfide-bonded: C849/C885, C923/C1274, C1081/C1104, and C1298/C1444. A cross-link (isoglutamyl cysteine thioester (Cys-Gln)) is located at residues 974–977 (CGEQ). N-linked (GlcNAc...) asparagine glycosylation is present at N1401.

This sequence belongs to the protease inhibitor I39 (alpha-2-macroglobulin) family. Monomer. Plasma.

It localises to the secreted. Its function is as follows. A proteinase activates the inhibitor by specific proteolysis in the bait region, which, by an unknown mechanism leads to reaction at the cysteinyl-glutamyl internal thiol ester site and to a conformational change, whereby the proteinase is trapped and/or covalently bound to the inhibitor. While in the tetrameric proteinase inhibitors steric inhibition is sufficiently strong, monomeric forms need a covalent linkage between the activated glutamyl residue of the original thiol ester and a terminal amino group of a lysine or another nucleophilic group on the proteinase, for inhibition to be effective. The sequence is that of Murinoglobulin-2 (Mug2) from Mus musculus (Mouse).